A 209-amino-acid polypeptide reads, in one-letter code: Regulator of G-protein signaling 1 (209 aa).

The disordered stretch occupies residues F18 to R42. Residues K24 to K38 show a composition bias toward basic and acidic residues. Positions S85–L200 constitute an RGS domain.

In terms of assembly, interacts with GNAI1 and GNAQ. As to expression, expressed in multiple tissues.

It localises to the cell membrane. It is found in the cytoplasm. The protein resides in the cytosol. Regulates G protein-coupled receptor signaling cascades, including signaling downstream of the N-formylpeptide chemoattractant receptors and leukotriene receptors. Inhibits B cell chemotaxis toward CXCL12. Inhibits signal transduction by increasing the GTPase activity of G protein alpha subunits, thereby driving them into their inactive GDP-bound form. In Rattus norvegicus (Rat), this protein is Regulator of G-protein signaling 1 (Rgs1).